The following is a 427-amino-acid chain: Serine hydroxymethyltransferase (427 aa).

Residues Leu-122 and 126–128 (GHL) contribute to the (6S)-5,6,7,8-tetrahydrofolate site. Residue Lys-231 is modified to N6-(pyridoxal phosphate)lysine. Residue 355-357 (SPF) participates in (6S)-5,6,7,8-tetrahydrofolate binding.

This sequence belongs to the SHMT family. In terms of assembly, homodimer. Requires pyridoxal 5'-phosphate as cofactor.

The protein resides in the cytoplasm. It carries out the reaction (6R)-5,10-methylene-5,6,7,8-tetrahydrofolate + glycine + H2O = (6S)-5,6,7,8-tetrahydrofolate + L-serine. Its pathway is one-carbon metabolism; tetrahydrofolate interconversion. The protein operates within amino-acid biosynthesis; glycine biosynthesis; glycine from L-serine: step 1/1. Its function is as follows. Catalyzes the reversible interconversion of serine and glycine with tetrahydrofolate (THF) serving as the one-carbon carrier. This reaction serves as the major source of one-carbon groups required for the biosynthesis of purines, thymidylate, methionine, and other important biomolecules. Also exhibits THF-independent aldolase activity toward beta-hydroxyamino acids, producing glycine and aldehydes, via a retro-aldol mechanism. The chain is Serine hydroxymethyltransferase from Synechococcus sp. (strain ATCC 27144 / PCC 6301 / SAUG 1402/1) (Anacystis nidulans).